The following is a 728-amino-acid chain: UvrABC system protein C (728 aa).

In terms of domain architecture, GIY-YIG spans 16 to 95 (DSPGVYRFRD…IKEYDPRFNV (80 aa)). In terms of domain architecture, UVR spans 208–243 (GTYLRRLERQMAEAAEEMEYERAARLRDDIGALKKA). 2 disordered regions span residues 473 to 535 (ADGE…GRPK) and 689 to 728 (VNTA…GQER). A compositionally biased stretch (low complexity) spans 487–505 (GDAAPNGDAAPNDGAAPDD).

This sequence belongs to the UvrC family. Interacts with UvrB in an incision complex.

It localises to the cytoplasm. Functionally, the UvrABC repair system catalyzes the recognition and processing of DNA lesions. UvrC both incises the 5' and 3' sides of the lesion. The N-terminal half is responsible for the 3' incision and the C-terminal half is responsible for the 5' incision. The protein is UvrABC system protein C of Streptomyces coelicolor (strain ATCC BAA-471 / A3(2) / M145).